A 299-amino-acid polypeptide reads, in one-letter code: Phosphatidylserine decarboxylase proenzyme (299 aa).

Catalysis depends on charge relay system; for autoendoproteolytic cleavage activity residues D90, H147, and S254. S254 acts as the Schiff-base intermediate with substrate; via pyruvic acid; for decarboxylase activity in catalysis. S254 is subject to Pyruvic acid (Ser); by autocatalysis.

This sequence belongs to the phosphatidylserine decarboxylase family. PSD-B subfamily. Prokaryotic type I sub-subfamily. As to quaternary structure, heterodimer of a large membrane-associated beta subunit and a small pyruvoyl-containing alpha subunit. Requires pyruvate as cofactor. Post-translationally, is synthesized initially as an inactive proenzyme. Formation of the active enzyme involves a self-maturation process in which the active site pyruvoyl group is generated from an internal serine residue via an autocatalytic post-translational modification. Two non-identical subunits are generated from the proenzyme in this reaction, and the pyruvate is formed at the N-terminus of the alpha chain, which is derived from the carboxyl end of the proenzyme. The autoendoproteolytic cleavage occurs by a canonical serine protease mechanism, in which the side chain hydroxyl group of the serine supplies its oxygen atom to form the C-terminus of the beta chain, while the remainder of the serine residue undergoes an oxidative deamination to produce ammonia and the pyruvoyl prosthetic group on the alpha chain. During this reaction, the Ser that is part of the protease active site of the proenzyme becomes the pyruvoyl prosthetic group, which constitutes an essential element of the active site of the mature decarboxylase.

It is found in the cell membrane. The enzyme catalyses a 1,2-diacyl-sn-glycero-3-phospho-L-serine + H(+) = a 1,2-diacyl-sn-glycero-3-phosphoethanolamine + CO2. It functions in the pathway phospholipid metabolism; phosphatidylethanolamine biosynthesis; phosphatidylethanolamine from CDP-diacylglycerol: step 2/2. Functionally, catalyzes the formation of phosphatidylethanolamine (PtdEtn) from phosphatidylserine (PtdSer). The protein is Phosphatidylserine decarboxylase proenzyme of Erwinia tasmaniensis (strain DSM 17950 / CFBP 7177 / CIP 109463 / NCPPB 4357 / Et1/99).